We begin with the raw amino-acid sequence, 416 residues long: Vacuole membrane protein KMS2 (416 aa).

Position 2 is an N-acetylglycine (Gly2). Topologically, residues Gly2 to Asn59 are cytoplasmic. The chain crosses the membrane as a helical span at residues Val60–Leu80. Topologically, residues Asp81 to Trp100 are lumenal. The helical transmembrane segment at Trp101–Leu123 threads the bilayer. Residues Gly124–Asn249 lie on the Cytoplasmic side of the membrane. A helical transmembrane segment spans residues Phe250–Met270. Residues Cys271–Phe281 are Lumenal-facing. A helical membrane pass occupies residues Phe282 to Val304. Residues Cys305–Asn315 are Cytoplasmic-facing. The chain crosses the membrane as a helical span at residues Glu316–Ala336. Over Lys337–Ser364 the chain is Lumenal. A helical membrane pass occupies residues Phe365–Val385. Topologically, residues Thr386 to Lys416 are cytoplasmic.

This sequence belongs to the VMP1 family.

The protein localises to the endoplasmic reticulum membrane. Its function is as follows. Involved in the early secretory pathway. Required for the correct export of secretory products from the endoplasmic reticulum (ER) and involved in the maintenance of ER integrity. The chain is Vacuole membrane protein KMS2 from Arabidopsis thaliana (Mouse-ear cress).